The chain runs to 25 residues: Pregnancy-associated glycoprotein 59g (25 aa).

Asparagine 4 carries an N-linked (GlcNAc...) asparagine glycan.

It belongs to the peptidase A1 family. Highly expressed in the placenta between day 60 and day 100 of gestation.

Its subcellular location is the secreted. It is found in the extracellular space. This is Pregnancy-associated glycoprotein 59g from Ovis aries (Sheep).